A 331-amino-acid chain; its full sequence is GTP-binding protein RHO5 (331 aa).

10–17 (GDGAVGKT) is a binding site for GTP. The segment at 51–76 (ASSPLELDNGNDKRGSLSSASSSPST) is disordered. Residues 66-75 (SLSSASSSPS) show a composition bias toward low complexity. GTP contacts are provided by residues 87–91 (DTAGQ) and 156–159 (TKSD). Phosphoserine is present on residues Ser-223 and Ser-228. Residues Thr-232 and Thr-244 each carry the phosphothreonine modification. The tract at residues 239 to 331 (TATTNTNGDK…KKKKSKCVIL (93 aa)) is disordered. Polar residues predominate over residues 258-273 (HHNNSTDSTLPKGSLQ). Lys-276 participates in a covalent cross-link: Glycyl lysine isopeptide (Lys-Gly) (interchain with G-Cter in ubiquitin). The segment covering 287–297 (GQKDKIHEQSK) has biased composition (basic and acidic residues). Over residues 308–331 (HHNKQAKPKTRNDKKKKKSKCVIL) the composition is skewed to basic residues. Cys-328 carries the cysteine methyl ester modification. A lipid anchor (S-geranylgeranyl cysteine) is attached at Cys-328. The propeptide at 329–331 (VIL) is removed in mature form.

The protein belongs to the small GTPase superfamily. Rho family. As to quaternary structure, interacts with RGD2.

The protein localises to the membrane. Its subcellular location is the mitochondrion. Its function is as follows. Small GTPase that negatively regulates a MAP kinase branch, downstream of SLT2, of the PKC1-mediated signal transduction pathway. With its specific guanine nucleotide exchange factor (GEF), the heterodimeric complex DCK1/LMO1, relocates to mitochondria upon oxidative stress and triggers cell death. The DCK1/LMO1/RHO5 signaling module that mediates mitochondrial turnover under nitrogen starvation conditions via mitophagy. The DCK1/LMO1/RHO5 signaling module also plays a role in cell wall integrity signaling. In Saccharomyces cerevisiae (strain ATCC 204508 / S288c) (Baker's yeast), this protein is GTP-binding protein RHO5.